The primary structure comprises 494 residues: Alpha-amylase-related protein (494 aa).

The first 20 residues, 1–20 (MIKFALALTLCLAGASLSLA), serve as a signal peptide directing secretion. Q21 bears the Pyrrolidone carboxylic acid mark. C48 and C104 are oxidised to a cystine. Ca(2+) is bound by residues N118, Q169, and D178. C157 and C171 are disulfide-bonded. R206 is a chloride binding site. D208 (nucleophile) is an active-site residue. Position 212 (H212) interacts with Ca(2+). Catalysis depends on E245, which acts as the Proton donor. The chloride site is built by N308 and R343. Disulfide bonds link C376–C382, C418–C441, and C448–C460.

This sequence belongs to the glycosyl hydrolase 13 family. In terms of assembly, monomer. It depends on Ca(2+) as a cofactor. The cofactor is chloride.

The protein resides in the secreted. The catalysed reaction is Endohydrolysis of (1-&gt;4)-alpha-D-glucosidic linkages in polysaccharides containing three or more (1-&gt;4)-alpha-linked D-glucose units.. In Drosophila kikkawai (Fruit fly), this protein is Alpha-amylase-related protein (Amyrel).